A 606-amino-acid chain; its full sequence is Atypical protein kinase C (606 aa).

One can recognise a PB1 domain in the interval 30–113 (SITVKTAYNG…SQLVIHVFPN (84 aa)). The Phorbol-ester/DAG-type zinc finger occupies 145 to 195 (GHIFQAKRFNRRAFCAYCQDRIWGLGRQGFKCIQCKLLVHKKCHKLVQKHC). The region spanning 264-532 (FELIRVIGRG…FMDIVSHPFF (269 aa)) is the Protein kinase domain. Residues 270 to 278 (IGRGSYAKV) and Lys293 each bind ATP. Asp388 acts as the Proton acceptor in catalysis. The AGC-kinase C-terminal domain occupies 533–604 (KNMDWELLER…VNPLLMSLED (72 aa)).

Belongs to the protein kinase superfamily. AGC Ser/Thr protein kinase family. PKC subfamily. In terms of assembly, interacts with baz; the interaction is required for apical localization of aPKC in neuroblasts and epithelial cells. Interacts with Dap160; the interaction promotes aPKC apical localization and kinase activity. Interacts with and phosphorylates l(2)gl and yrt. Interacts with crb and ref(2)P. Forms a complex with baz, fz and Patj. Expressed in the testis. In spermatid cysts, localizes near the tips of spermatid flagellar axonemes (at protein level). Detectable in freshly laid eggs before onset of zygotic transcription so is deposited in the egg during oogenesis. At the cellular blastoderm stage, present in all cells except the pole cells. During gastrulation, strongly expressed in tissues undergoing morphogenetic movements such as invaginating mesoderm, proctodeum and cephalic furrow. Strongly expressed in neuroblasts.

The protein localises to the cytoplasm. The protein resides in the cell cortex. It localises to the apicolateral cell membrane. It catalyses the reaction L-seryl-[protein] + ATP = O-phospho-L-seryl-[protein] + ADP + H(+). The enzyme catalyses L-threonyl-[protein] + ATP = O-phospho-L-threonyl-[protein] + ADP + H(+). Serine/threonine protein kinase which is required for apico-basal cell polarity in the germ line as well as in epithelial and neural precursor cells, for epithelial planar cell polarity and for cell proliferation. During oocyte development, required for the posterior translocation of oocyte specification factors and for the posterior establishment of the microtubule organizing center within the presumptive oocyte. Phosphorylates l(2)gl which restricts l(2)gl activity to the oocyte posterior and regulates posterior enrichment of par-1, leading to establishment of correct oocyte polarity. Essential for apical localization of l(2)gl and par-6 in neuroblasts and for exclusion of mira from the apical cortex. Phosphorylates baz which is required for targeting of baz to the postsynaptic region where it is involved in actin organization, and for apical exclusion of baz which is necessary for establishment of the apical/lateral border in epithelial cells. Phosphorylates yrt which prevents its premature apical localization and is necessary for correct epithelial cell polarization. Required for the establishment of mitotic spindle orientation during symmetric division of epithelial cells and for apical exclusion of raps/Pins. Involved in symmetric adherens junction positioning during embryogenesis. Required for polarization of the spermatid cyst which is necessary for sperm differentiation. Required for stimulation of the Toll signaling pathway which activates Dif and dl and plays a role in innate immunity. Plays a role in memory enhancement. The protein is Atypical protein kinase C of Drosophila melanogaster (Fruit fly).